Here is a 142-residue protein sequence, read N- to C-terminus: MKTFSAKAHEVKREWYVVDAADKVLGRLAAEIARRLRGKHKPEFTPHVDTGDFIVVVNVEKLRVTGTKAQDKKYYRHSGYPGGIYERTFTELQNQFPERVLEKAVKGMLPKGPLGYAMIKKLKVYSGSEHPHAAQQPKVLEI.

The protein belongs to the universal ribosomal protein uL13 family. In terms of assembly, part of the 50S ribosomal subunit.

Its function is as follows. This protein is one of the early assembly proteins of the 50S ribosomal subunit, although it is not seen to bind rRNA by itself. It is important during the early stages of 50S assembly. The chain is Large ribosomal subunit protein uL13 from Chromobacterium violaceum (strain ATCC 12472 / DSM 30191 / JCM 1249 / CCUG 213 / NBRC 12614 / NCIMB 9131 / NCTC 9757 / MK).